The chain runs to 1192 residues: Reticulon-4 (1192 aa).

M1 carries the N-acetylmethionine modification. Positions M1–A204 are disordered. Topologically, residues M1–G1018 are cytoplasmic. A phosphoserine mark is found at S7 and S15. The segment covering P31–E53 has biased composition (acidic residues). Residues A65–P77 show a composition bias toward low complexity. A compositionally biased stretch (pro residues) spans P87–A101. S107 carries the phosphoserine modification. A compositionally biased stretch (low complexity) spans P110–K132. A compositionally biased stretch (pro residues) spans A141–S150. A Phosphoserine modification is found at S152. Over residues W159–P173 the composition is skewed to pro residues. Phosphoserine occurs at positions 181, 182, 184, 361, and 446. The tract at residues D427 to S458 is disordered. T450 bears the Phosphothreonine mark. Residue S511 is modified to Phosphoserine. Residues A722 to L734 are compositionally biased toward basic and acidic residues. Residues A722 to E762 are disordered. A compositionally biased stretch (acidic residues) spans V735–I753. Position 749 is a phosphoserine (S749). Residue T858 is modified to Phosphothreonine. A phosphoserine mark is found at S881 and S991. A Reticulon domain is found at V1005–E1192. Residues V1019–V1039 traverse the membrane as a helical segment. At T1040–A1133 the chain is on the lumenal side. An N6-acetyllysine modification is found at K1104. Residues L1134 to I1154 traverse the membrane as a helical segment. At Y1155–E1192 the chain is on the cytoplasmic side.

Binds to RTN4R. Interacts with ATL1. Interacts with TMEM170A. Interacts with RTN4IP1. As to quaternary structure, interacts in trans with CNTNAP1. Interacts with REEP5. Interacts with synaptic plasticity regulator PANTS; the interaction results in enhanced RTN4-mediated inhibition of AMPA receptor clustering. Interacts with GPR50. In terms of assembly, homodimer. Interacts with BAD/Bcl-xl and BCL2. Interact with RTN3. Interacts with NGBR. Interacts with SPTLC1. Interacts with GRAMD4. Interacts with CDH5. Interacts with BACE1 and BACE2. Interacts with REEP5. Interacts with RETREG3. Interacts with BACE1 and BACE2. Interacts with TMEM33. Isoform A: is specifically expressed in brain and testis and weakly in heart and skeletal muscle. Isoform B: widely expressed except for the liver. Highly expressed in endothelial cells and vascular smooth muscle cells, including blood vessels and mesenteric arteries. Isoform C: is expressed in brain, skeletal muscle and adipocytes. Isoform D is testis-specific.

The protein localises to the endoplasmic reticulum membrane. The protein resides in the cell membrane. It is found in the synapse. Its subcellular location is the cell junction. Its function is as follows. Required to induce the formation and stabilization of endoplasmic reticulum (ER) tubules. They regulate membrane morphogenesis in the ER by promoting tubular ER production. They influence nuclear envelope expansion, nuclear pore complex formation and proper localization of inner nuclear membrane proteins. However each isoform have specific functions mainly depending on their tissue expression specificities. Developmental neurite growth regulatory factor with a role as a negative regulator of axon-axon adhesion and growth, and as a facilitator of neurite branching. Regulates neurite fasciculation, branching and extension in the developing nervous system. Involved in down-regulation of growth, stabilization of wiring and restriction of plasticity in the adult CNS. Regulates the radial migration of cortical neurons via an RTN4R-LINGO1 containing receptor complex. Acts as a negative regulator of central nervous system angiogenesis. Inhibits spreading, migration and sprouting of primary brain microvascular endothelial cells (MVECs). Also induces the retraction of MVECs lamellipodia and filopodia in a ROCK pathway-dependent manner. In terms of biological role, mainly function in endothelial cells and vascular smooth muscle cells, is also involved in immune system regulation. Modulator of vascular remodeling, promotes the migration of endothelial cells but inhibits the migration of vascular smooth muscle cells. Regulates endothelial sphingolipid biosynthesis with direct effects on vascular function and blood pressure. Inhibits serine palmitoyltransferase, SPTLC1, the rate-limiting enzyme of the novo sphingolipid biosynthetic pathway, thereby controlling production of endothelial sphingosine-1-phosphate (S1P). Required to promote macrophage homing and functions such as cytokine/chemokine gene expression involved in angiogenesis, arteriogenesis and tissue repair. Mediates ICAM1 induced transendothelial migration of leukocytes such as monocytes and neutrophils and acute inflammation. Necessary for immune responses triggered by nucleic acid sensing TLRs, such as TLR9, is required for proper TLR9 location to endolysosomes. Also involved in immune response to LPS. Plays a role in liver regeneration through the modulation of hepatocytes proliferation. Reduces the anti-apoptotic activity of Bcl-xl and Bcl-2. This is likely consecutive to their change in subcellular location, from the mitochondria to the endoplasmic reticulum, after binding and sequestration. With isoform C, inhibits BACE1 activity and amyloid precursor protein processing. Functionally, regulates cardiomyocyte apoptosis upon hypoxic conditions. With isoform B, inhibits BACE1 activity and amyloid precursor protein processing. The chain is Reticulon-4 from Homo sapiens (Human).